Consider the following 90-residue polypeptide: Probable Fe(2+)-trafficking protein (90 aa).

This sequence belongs to the Fe(2+)-trafficking protein family.

In terms of biological role, could be a mediator in iron transactions between iron acquisition and iron-requiring processes, such as synthesis and/or repair of Fe-S clusters in biosynthetic enzymes. This Stutzerimonas stutzeri (strain A1501) (Pseudomonas stutzeri) protein is Probable Fe(2+)-trafficking protein.